Here is a 564-residue protein sequence, read N- to C-terminus: Proline--tRNA ligase (564 aa).

It belongs to the class-II aminoacyl-tRNA synthetase family. ProS type 1 subfamily. As to quaternary structure, homodimer.

It localises to the cytoplasm. The enzyme catalyses tRNA(Pro) + L-proline + ATP = L-prolyl-tRNA(Pro) + AMP + diphosphate. In terms of biological role, catalyzes the attachment of proline to tRNA(Pro) in a two-step reaction: proline is first activated by ATP to form Pro-AMP and then transferred to the acceptor end of tRNA(Pro). As ProRS can inadvertently accommodate and process non-cognate amino acids such as alanine and cysteine, to avoid such errors it has two additional distinct editing activities against alanine. One activity is designated as 'pretransfer' editing and involves the tRNA(Pro)-independent hydrolysis of activated Ala-AMP. The other activity is designated 'posttransfer' editing and involves deacylation of mischarged Ala-tRNA(Pro). The misacylated Cys-tRNA(Pro) is not edited by ProRS. The chain is Proline--tRNA ligase from Sulfurihydrogenibium sp. (strain YO3AOP1).